A 240-amino-acid polypeptide reads, in one-letter code: 2,3,4,5-tetrahydropyridine-2,6-dicarboxylate N-acetyltransferase (240 aa).

It belongs to the transferase hexapeptide repeat family. DapH subfamily.

The enzyme catalyses (S)-2,3,4,5-tetrahydrodipicolinate + acetyl-CoA + H2O = L-2-acetamido-6-oxoheptanedioate + CoA. The protein operates within amino-acid biosynthesis; L-lysine biosynthesis via DAP pathway; LL-2,6-diaminopimelate from (S)-tetrahydrodipicolinate (acetylase route): step 1/3. In terms of biological role, catalyzes the transfer of an acetyl group from acetyl-CoA to tetrahydrodipicolinate. The sequence is that of 2,3,4,5-tetrahydropyridine-2,6-dicarboxylate N-acetyltransferase from Bacillus mycoides (strain KBAB4) (Bacillus weihenstephanensis).